We begin with the raw amino-acid sequence, 270 residues long: Phosphonoacetaldehyde hydrolase (270 aa).

Asp-11 acts as the Nucleophile in catalysis. Asp-11 and Ala-13 together coordinate Mg(2+). Catalysis depends on Lys-53, which acts as the Schiff-base intermediate with substrate. Asp-187 is a binding site for Mg(2+).

This sequence belongs to the HAD-like hydrolase superfamily. PhnX family. As to quaternary structure, homodimer. It depends on Mg(2+) as a cofactor.

It carries out the reaction phosphonoacetaldehyde + H2O = acetaldehyde + phosphate + H(+). In terms of biological role, involved in phosphonate degradation. This is Phosphonoacetaldehyde hydrolase from Salmonella choleraesuis (strain SC-B67).